Consider the following 361-residue polypeptide: Carbamoyl phosphate synthase small chain (361 aa).

Positions 1–173 (MRAALALEDG…SVREEYRFSD (173 aa)) are CPSase. L-glutamine-binding residues include Ser-45, Gly-225, and Gly-227. The Glutamine amidotransferase type-1 domain maps to 177 to 361 (EIVVIDCGVK…DEFLAMCREH (185 aa)). The Nucleophile role is filled by Cys-252. Residues Leu-253, Gln-256, Asn-294, Gly-296, and Phe-297 each coordinate L-glutamine. Catalysis depends on residues His-337 and Glu-339.

Belongs to the CarA family. As to quaternary structure, composed of two chains; the small (or glutamine) chain promotes the hydrolysis of glutamine to ammonia, which is used by the large (or ammonia) chain to synthesize carbamoyl phosphate. Tetramer of heterodimers (alpha,beta)4.

It catalyses the reaction hydrogencarbonate + L-glutamine + 2 ATP + H2O = carbamoyl phosphate + L-glutamate + 2 ADP + phosphate + 2 H(+). The enzyme catalyses L-glutamine + H2O = L-glutamate + NH4(+). It participates in amino-acid biosynthesis; L-arginine biosynthesis; carbamoyl phosphate from bicarbonate: step 1/1. Its pathway is pyrimidine metabolism; UMP biosynthesis via de novo pathway; (S)-dihydroorotate from bicarbonate: step 1/3. Its function is as follows. Small subunit of the glutamine-dependent carbamoyl phosphate synthetase (CPSase). CPSase catalyzes the formation of carbamoyl phosphate from the ammonia moiety of glutamine, carbonate, and phosphate donated by ATP, constituting the first step of 2 biosynthetic pathways, one leading to arginine and/or urea and the other to pyrimidine nucleotides. The small subunit (glutamine amidotransferase) binds and cleaves glutamine to supply the large subunit with the substrate ammonia. The protein is Carbamoyl phosphate synthase small chain of Methanopyrus kandleri (strain AV19 / DSM 6324 / JCM 9639 / NBRC 100938).